Reading from the N-terminus, the 149-residue chain is Calmodulin-5/6/7/8 (149 aa).

Position 2 is an N-acetylalanine (Ala2). EF-hand domains follow at residues 8–43 (DQISEFKEAFSLFDKDGDGCITTKELGTVMRSLGQN), 44–79 (PTEAELQDMINEVDADGNGTIDFPEFLNLMARKMKD), 81–116 (DSEEELKEAFRVFDKDQNGFISAAELRHVMTNLGEK), and 117–149 (LTDEEVDEMIREADVDGDGQINYDEFVKVMMAK). Residues Asp21, Asp23, Asp25, Cys27, Glu32, Asp57, Asp59, Asn61, Thr63, Glu68, Asp94, Asp96, Asn98, and Glu105 each contribute to the Ca(2+) site. An N6,N6,N6-trimethyllysine modification is found at Lys116. 5 residues coordinate Ca(2+): Asp130, Asp132, Asp134, Gln136, and Glu141.

Belongs to the calmodulin family. As to expression, high expression of PCM5 and 8 in stolon tips and stems, moderate in roots, and low in leaves. Steady-state expression of PCM6 in all the tissues tested, except in the leaves where the expression is lower.

Its function is as follows. Calmodulin mediates the control of a large number of enzymes, ion channels and other proteins by Ca(2+). Among the enzymes to be stimulated by the calmodulin-Ca(2+) complex are a number of protein kinases and phosphatases. The polypeptide is Calmodulin-5/6/7/8 (PCM5) (Solanum tuberosum (Potato)).